The following is a 193-amino-acid chain: Xanthine phosphoribosyltransferase (193 aa).

Leu-20 and Thr-27 together coordinate xanthine. 128-132 (ANGQA) lines the 5-phospho-alpha-D-ribose 1-diphosphate pocket. Lys-156 lines the xanthine pocket.

Belongs to the purine/pyrimidine phosphoribosyltransferase family. Xpt subfamily. Homodimer.

The protein resides in the cytoplasm. The catalysed reaction is XMP + diphosphate = xanthine + 5-phospho-alpha-D-ribose 1-diphosphate. It functions in the pathway purine metabolism; XMP biosynthesis via salvage pathway; XMP from xanthine: step 1/1. Functionally, converts the preformed base xanthine, a product of nucleic acid breakdown, to xanthosine 5'-monophosphate (XMP), so it can be reused for RNA or DNA synthesis. This chain is Xanthine phosphoribosyltransferase, found in Streptococcus uberis (strain ATCC BAA-854 / 0140J).